Reading from the N-terminus, the 268-residue chain is Riboflavin transport system permease protein RibX (268 aa).

The next 6 membrane-spanning stretches (helical) occupy residues 24 to 44 (ALGL…GVTL), 76 to 96 (LATL…ALIL), 119 to 139 (AIPV…GLTS), 140 to 160 (KVLV…VVAI), 185 to 205 (VEAP…LALA), and 236 to 256 (LIFV…VLAG). Residues 75–255 (TLATLSAALG…LITLTLYVLA (181 aa)) form the ABC transmembrane type-1 domain.

It belongs to the binding-protein-dependent transport system permease family. The complex is likely composed of an ATP-binding protein, a transmembrane protein (RibX) and a solute-binding protein (RibY).

The protein resides in the cell membrane. Functionally, part of an ABC transporter complex that transports riboflavin into the cell. This chain is Riboflavin transport system permease protein RibX, found in Chloroflexus aurantiacus (strain ATCC 29366 / DSM 635 / J-10-fl).